Reading from the N-terminus, the 87-residue chain is Beta-toxin Cn5 (87 aa).

An N-terminal signal peptide occupies residues 1–19 (MNSLLMITACLFLIGTVWA). One can recognise an LCN-type CS-alpha/beta domain in the interval 20 to 85 (KEGYLVNKST…TYPLPNKSCS (66 aa)). Cystine bridges form between Cys31/Cys84, Cys35/Cys60, Cys44/Cys65, and Cys48/Cys67.

This sequence belongs to the long (4 C-C) scorpion toxin superfamily. Sodium channel inhibitor family. Beta subfamily. Expressed by the venom gland.

The protein resides in the secreted. Functionally, beta toxins bind voltage-independently at site-4 of sodium channels (Nav) and shift the voltage of activation toward more negative potentials thereby affecting sodium channel activation and promoting spontaneous and repetitive firing. This toxin is lethal to crustaceans (freshwater crayfish (Cambarellus montezumae spp.)), it provokes a reversible paralysis to insects (crickets (Achaeta spp.)), but is not toxic to mice. At high concentrations, it does displace the (beta) mammal-specific toxin Cn2 from rat brain synaptosomes. The polypeptide is Beta-toxin Cn5 (Centruroides noxius (Mexican scorpion)).